We begin with the raw amino-acid sequence, 432 residues long: 3-phosphoshikimate 1-carboxyvinyltransferase (432 aa).

3 residues coordinate 3-phosphoshikimate: lysine 23, serine 24, and arginine 28. Lysine 23 provides a ligand contact to phosphoenolpyruvate. Positions 95 and 123 each coordinate phosphoenolpyruvate. 3-phosphoshikimate-binding residues include serine 167, glutamine 169, aspartate 317, and lysine 344. Glutamine 169 serves as a coordination point for phosphoenolpyruvate. Residue aspartate 317 is the Proton acceptor of the active site. Phosphoenolpyruvate contacts are provided by arginine 348 and arginine 390.

It belongs to the EPSP synthase family. Monomer.

It is found in the cytoplasm. The enzyme catalyses 3-phosphoshikimate + phosphoenolpyruvate = 5-O-(1-carboxyvinyl)-3-phosphoshikimate + phosphate. It participates in metabolic intermediate biosynthesis; chorismate biosynthesis; chorismate from D-erythrose 4-phosphate and phosphoenolpyruvate: step 6/7. Functionally, catalyzes the transfer of the enolpyruvyl moiety of phosphoenolpyruvate (PEP) to the 5-hydroxyl of shikimate-3-phosphate (S3P) to produce enolpyruvyl shikimate-3-phosphate and inorganic phosphate. The chain is 3-phosphoshikimate 1-carboxyvinyltransferase from Staphylococcus aureus (strain N315).